The primary structure comprises 139 residues: ATP synthase epsilon chain 2 (139 aa).

It belongs to the ATPase epsilon chain family. In terms of assembly, F-type ATPases have 2 components, CF(1) - the catalytic core - and CF(0) - the membrane proton channel. CF(1) has five subunits: alpha(3), beta(3), gamma(1), delta(1), epsilon(1). CF(0) has three main subunits: a, b and c.

It is found in the cell inner membrane. Produces ATP from ADP in the presence of a proton gradient across the membrane. The sequence is that of ATP synthase epsilon chain 2 (atpC2) from Ralstonia nicotianae (strain ATCC BAA-1114 / GMI1000) (Ralstonia solanacearum).